A 354-amino-acid chain; its full sequence is Uroporphyrinogen decarboxylase (354 aa).

Substrate-binding positions include 27–31 (RQAGR), Asp-77, Tyr-154, Ser-209, and His-327.

The protein belongs to the uroporphyrinogen decarboxylase family. As to quaternary structure, homodimer.

The protein resides in the cytoplasm. The enzyme catalyses uroporphyrinogen III + 4 H(+) = coproporphyrinogen III + 4 CO2. Its pathway is porphyrin-containing compound metabolism; protoporphyrin-IX biosynthesis; coproporphyrinogen-III from 5-aminolevulinate: step 4/4. Its function is as follows. Catalyzes the decarboxylation of four acetate groups of uroporphyrinogen-III to yield coproporphyrinogen-III. The polypeptide is Uroporphyrinogen decarboxylase (Pseudomonas savastanoi pv. phaseolicola (strain 1448A / Race 6) (Pseudomonas syringae pv. phaseolicola (strain 1448A / Race 6))).